Here is a 93-residue protein sequence, read N- to C-terminus: Putative defensin-like protein 283 (93 aa).

Positions 1-24 (MTKIGFYLATYATIYIILSPGLLA) are cleaved as a signal peptide. Intrachain disulfides connect Cys-43/Cys-83, Cys-66/Cys-90, and Cys-72/Cys-92.

The protein belongs to the DEFL family.

The protein resides in the secreted. The chain is Putative defensin-like protein 283 from Arabidopsis thaliana (Mouse-ear cress).